A 533-amino-acid chain; its full sequence is Lymphocyte cytosolic protein 2 (533 aa).

Residues 15–81 (WDPDSLADYF…INKNEERRSI (67 aa)) form the SAM domain. Tyr23 is modified (phosphotyrosine). A disordered region spans residues 78-417 (RRSIFTRKPQ…PPSPAEEENS (340 aa)). A compositionally biased stretch (acidic residues) spans 108 to 155 (FEEDDYESPNDDQDGEDDGDYESPNEEEEAPVEDDADYEPPPSNDEEA). A compositionally biased stretch (pro residues) spans 184 to 213 (QQPPVPPQRPMAALPPPPAGRNHSPLPPPQ). The residue at position 207 (Ser207) is a Phosphoserine. Polar residues-rich tracts occupy residues 337-350 (MSSN…TKPS) and 365-376 (SESNSSFPQSAS). Ser376 and Ser410 each carry phosphoserine. Pro residues predominate over residues 400–411 (LPLPNKPRPPSP). Residues 422-530 (WYVSYITRPE…RYQCTLTHAA (109 aa)) enclose the SH2 domain.

As to quaternary structure, interacts with SLA. Interacts with CBLB. Interacts with GRB2. Interacts with SHB. Interacts with PRAM1. Interacts (via SH2 domain) with CD6 (via tyrosine phosphorylated C-terminus). Interacts with FYB1 and the phosphorylated form of FYB2. Interacts with 14-3-3 adapter/YWHAZ; this phosphorylation leads to YWHAZ proteolytic degradation. Interacts with VAV1; this interaction plays a role in TCR-mediated cytokine production. Interacts with AGER; this interaction plays an important role in AGER-mediated pro-inflammatory responses and cytokine release. In terms of processing, phosphorylated after T-cell receptor activation by ZAP70, ITK and TXK, which leads to the up-regulation of Th1 preferred cytokine IL-2. SYK-dependent phosphorylation is required for recruitment of PI3K signaling components. Highly expressed in spleen, thymus and peripheral blood leukocytes. Highly expressed also in T-cell and monocytic cell lines, expressed at lower level in B-cell lines. Not detected in fibroblast or neuroblastoma cell lines.

It is found in the cytoplasm. Functionally, adapter protein primarily involved in signaling pathways within T-cells, as well as other immune cells such as platelets, mast cells, and natural killer (NK) cells. Plays a crucial role for transducing signal from the T-cell receptor (TCR) after antigen recognition leading to T-cell activation. Mechanistically, once phosphorylated by the kinase ZAP70, mediates interactions with the guanine-nucleotide exchange factor VAV1, the adapter protein NCK and the kinase ITK. In turn, stimulates the activation of PKC-theta/PRKCQ and NF-kappa-B transcriptional activity in response to CD3 and CD28 costimulation. Also plays an essential role in AGER-induced signaling pathways including p38 MAPK and ERK1/2 activation leading to cytokine release and pro-inflammatory responses. The chain is Lymphocyte cytosolic protein 2 (LCP2) from Homo sapiens (Human).